A 73-amino-acid chain; its full sequence is Mu-conotoxin SIIIA (73 aa).

The N-terminal stretch at 1–20 (MMSKLGVLLTVCPLLFPLTA) is a signal peptide. Positions 20-40 (ALPPDGDQPADRPAERMQDDI) are disordered. Residues 21–49 (LPPDGDQPADRPAERMQDDISSDEHPLFD) constitute a propeptide that is removed on maturation. The span at 28-40 (PADRPAERMQDDI) shows a compositional bias: basic and acidic residues. At Gln52 the chain carries Pyrrolidone carboxylic acid. 3 cysteine pairs are disulfide-bonded: Cys54–Cys64, Cys55–Cys70, and Cys59–Cys71. Residue Cys71 is modified to Cysteine amide.

The protein belongs to the conotoxin M superfamily. Expressed by the venom duct.

The protein localises to the secreted. Functionally, mu-conotoxins block voltage-gated sodium channels (Nav). This toxin moderately blocks rNav1.1/SCN1A, rNav1.2/SCN2A, rNav1.3/SCN3A, rNav1.4/SCN4A, and mNav1.6/SCN8A. This chain is Mu-conotoxin SIIIA, found in Conus striatus (Striated cone).